Consider the following 181-residue polypeptide: Endoglucanase (181 aa).

Cysteine 4 and cysteine 16 are disulfide-bonded. The Nucleophile role is filled by aspartate 24. Intrachain disulfides connect cysteine 30–cysteine 69, cysteine 32–cysteine 176, cysteine 65–cysteine 178, cysteine 72–cysteine 157, and cysteine 103–cysteine 113. Aspartate 132 functions as the Proton donor in the catalytic mechanism.

Digestive gland.

The catalysed reaction is Endohydrolysis of (1-&gt;4)-beta-D-glucosidic linkages in cellulose, lichenin and cereal beta-D-glucans.. Its function is as follows. Active towards the soluble carboxymethylcellulose (CMC). Possesses expansin activity too. This Mytilus edulis (Blue mussel) protein is Endoglucanase.